A 396-amino-acid chain; its full sequence is L-tyrosine/L-aspartate decarboxylase (396 aa).

Lys245 carries the post-translational modification N6-(pyridoxal phosphate)lysine.

Belongs to the group II decarboxylase family. MfnA subfamily. In terms of assembly, homodimer. Pyridoxal 5'-phosphate is required as a cofactor.

It carries out the reaction L-tyrosine + H(+) = tyramine + CO2. The catalysed reaction is L-aspartate + H(+) = beta-alanine + CO2. It participates in cofactor biosynthesis; methanofuran biosynthesis. The protein operates within cofactor biosynthesis; coenzyme A biosynthesis. Its activity is regulated as follows. Inhibited by hydroxylamine and O-methylhydroxylamine. Functionally, catalyzes the decarboxylation of L-tyrosine to produce tyramine for methanofuran biosynthesis. Can also catalyze the decarboxylation of L-aspartate to produce beta-alanine for coenzyme A (CoA) biosynthesis. The chain is L-tyrosine/L-aspartate decarboxylase from Methanocaldococcus jannaschii (strain ATCC 43067 / DSM 2661 / JAL-1 / JCM 10045 / NBRC 100440) (Methanococcus jannaschii).